The chain runs to 1087 residues: Apoptosis-stimulating of p53 protein 1 (1087 aa).

Residues H82–P122 form a disordered region. Over residues T87–V106 the composition is skewed to polar residues. S332 and S335 each carry phosphoserine. Disordered regions lie at residues S374–G415, I442–Q721, and G734–G878. Polar residues predominate over residues K393–T405. Residues G445–P458 show a composition bias toward pro residues. Low complexity predominate over residues S459 to S476. Residues N506–I520 show a composition bias toward polar residues. Residues P523–F536 show a composition bias toward pro residues. An Asymmetric dimethylarginine modification is found at R552. The span at Q570–K589 shows a compositional bias: polar residues. Positions P610–L625 are enriched in low complexity. Phosphoserine is present on residues S679 and S708. The segment covering P805–I831 has biased composition (polar residues). ANK repeat units follow at residues E917–S949 and D950–I982. The SH3 domain maps to M1016 to R1078.

The protein belongs to the ASPP family. As to quaternary structure, interacts with P53/TP53; the interaction promotes pro-apoptotic activity.

It is found in the cytoplasm. The protein localises to the nucleus. Regulator that plays a central role in regulation of apoptosis via its interaction with p53/TP53. Regulates TP53 by enhancing the DNA binding and transactivation function of TP53 on the promoters of proapoptotic genes in vivo. This Mus musculus (Mouse) protein is Apoptosis-stimulating of p53 protein 1 (Ppp1r13b).